A 562-amino-acid chain; its full sequence is Laccase-2 (562 aa).

An N-terminal signal peptide occupies residues 1-26 (MASAASSLPLLVSSLLLALFALGAHA). 2 Plastocyanin-like domains span residues 34-150 (DIVM…PAAG) and 160-312 (DEAE…YAGV). Asn39, Asn53, Asn72, and Asn80 each carry an N-linked (GlcNAc...) asparagine glycan. The Cu cation site is built by His84 and His86. N-linked (GlcNAc...) asparagine glycosylation is present at Asn118. Residues His129 and His131 each contribute to the Cu cation site. 8 N-linked (GlcNAc...) asparagine glycosylation sites follow: Asn189, Asn244, Asn300, Asn328, Asn376, Asn386, Asn421, and Asn445. Residues 411 to 546 (DFPDRPPARF…KMAFLVEDGS (136 aa)) enclose the Plastocyanin-like 3 domain. 7 residues coordinate Cu cation: His463, His466, His468, His525, Cys526, His527, and His531.

It belongs to the multicopper oxidase family. Cu cation is required as a cofactor.

The protein localises to the secreted. Its subcellular location is the extracellular space. It is found in the apoplast. It catalyses the reaction 4 hydroquinone + O2 = 4 benzosemiquinone + 2 H2O. In terms of biological role, lignin degradation and detoxification of lignin-derived products. The sequence is that of Laccase-2 (LAC2) from Oryza sativa subsp. japonica (Rice).